A 172-amino-acid chain; its full sequence is 3-hydroxydecanoyl-[acyl-carrier-protein] dehydratase (172 aa).

His70 is an active-site residue.

Belongs to the thioester dehydratase family. FabA subfamily. As to quaternary structure, homodimer.

It localises to the cytoplasm. It catalyses the reaction a (3R)-hydroxyacyl-[ACP] = a (2E)-enoyl-[ACP] + H2O. The catalysed reaction is (3R)-hydroxydecanoyl-[ACP] = (2E)-decenoyl-[ACP] + H2O. The enzyme catalyses (2E)-decenoyl-[ACP] = (3Z)-decenoyl-[ACP]. Its pathway is lipid metabolism; fatty acid biosynthesis. Its function is as follows. Necessary for the introduction of cis unsaturation into fatty acids. Catalyzes the dehydration of (3R)-3-hydroxydecanoyl-ACP to E-(2)-decenoyl-ACP and then its isomerization to Z-(3)-decenoyl-ACP. Can catalyze the dehydratase reaction for beta-hydroxyacyl-ACPs with saturated chain lengths up to 16:0, being most active on intermediate chain length. The sequence is that of 3-hydroxydecanoyl-[acyl-carrier-protein] dehydratase from Xylella fastidiosa (strain M23).